Reading from the N-terminus, the 748-residue chain is Serine/threonine-protein kinase CG17528 (748 aa).

Composition is skewed to polar residues over residues 22–35 (QASP…SVPS) and 47–59 (EKTN…QEDN). 2 disordered regions span residues 22-41 (QASP…NVVT) and 47-81 (EKTN…ELDD). Residues Ser67, Ser70, Ser73, Ser87, Ser88, and Ser89 each carry the phosphoserine modification. Position 91 is a phosphothreonine (Thr91). Ser93 is subject to Phosphoserine. Thr100 is modified (phosphothreonine). 2 consecutive Doublecortin domains span residues 158-244 (LRIK…VEYN) and 313-396 (RIVT…AEDF). A Protein kinase domain is found at 477–735 (YSLGRIIGDG…SEDILDHSWT (259 aa)). ATP contacts are provided by residues 483-491 (IGDGNFAIV) and Lys506. Catalysis depends on Asp598, which acts as the Proton acceptor.

Belongs to the protein kinase superfamily. CAMK Ser/Thr protein kinase family. CaMK subfamily.

The enzyme catalyses L-seryl-[protein] + ATP = O-phospho-L-seryl-[protein] + ADP + H(+). It catalyses the reaction L-threonyl-[protein] + ATP = O-phospho-L-threonyl-[protein] + ADP + H(+). The polypeptide is Serine/threonine-protein kinase CG17528 (Drosophila melanogaster (Fruit fly)).